The primary structure comprises 796 residues: MKENYCLQAALVCLGMLCHSHAFAPERRGHLRPSFHGHHEKGKEGQVLQRSKRGWVWNQFFVIEEYTGPDPVLVGRLHSDIDSGDGNIKYILSGEGAGTIFVIDDKSGNIHATKTLDREERAQYTLMAQAVDRDTNRPLEPPSEFIVKVQDINDNPPEFLHETYHANVPERSNVGTSVIQVTASDADDPTYGNSAKLVYSILEGQPYFSVEAQTGIIRTALPNMDREAKEEYHVVIQAKDMGGHMGGLSGTTKVTITLTDVNDNPPKFPQSVYQMSVSEAAVPGEEVGRVKAKDPDIGENGLVTYNIVDGDGMESFEITTDYETQEGVIKLKKPVDFETKRAYSLKVEAANVHIDPKFISNGPFKDTVTVKISVEDADEPPMFLAPSYIHEVQENAAAGTVVGRVHAKDPDAANSPIRYSIDRHTDLDRFFTINPEDGFIKTTKPLDREETAWLNITVFAAEIHNRHQEAKVPVAIRVLDVNDNAPKFAAPYEGFICESDQTKPLSNQPIVTISADDKDDTANGPRFIFSLPPEIIHNPNFTVRDNRDNTAGVYARRGGFSRQKQDLYLLPIVISDGGIPPMSSTNTLTIKVCGCDVNGALLSCNAEAYILNAGLSTGALIAILACIVILLVIVVLFVTLRRQKKEPLIVFEEEDVRENIITYDDEGGGEEDTEAFDIATLQNPDGINGFIPRKDIKPEYQYMPRPGLRPAPNSVDVDDFINTRIQEADNDPTAPPYDSIQIYGYEGRGSVAGSLSSLESATTDSDLDYDYLQNWGPRFKKLADLYGSKDTFDDDS.

Residues 1 to 22 (MKENYCLQAALVCLGMLCHSHA) form the signal peptide. The propeptide occupies 23 to 53 (FAPERRGHLRPSFHGHHEKGKEGQVLQRSKR). Cadherin domains lie at 54-159 (GWVW…PPEF), 160-268 (LHET…PPKF), 269-383 (PQSV…PPMF), 384-486 (LAPS…DNAP), and 487-612 (KFAA…YILN). Residues 54-617 (GWVWNQFFVI…AYILNAGLST (564 aa)) are Extracellular-facing. N-linked (GlcNAc...) asparagine glycans are attached at residues Asn455 and Asn540. Residues 618–640 (GALIAILACIVILLVIVVLFVTL) form a helical membrane-spanning segment. At 641 to 796 (RRQKKEPLIV…GSKDTFDDDS (156 aa)) the chain is on the cytoplasmic side. Ser788 carries the post-translational modification Phosphoserine. Thr791 is subject to Phosphothreonine.

Interacts with PCDH8. In terms of tissue distribution, expressed mainly in brain but also found in other tissues. Expressed in neuroblasts. In the embryo from 67 to 72 days of gestation, detected at high levels in facial mesenchyme including the central palatal mesenchyme, dental mesenchyme, the eye and optic muscle, and the tongue (at protein level).

It is found in the cell membrane. Cadherins are calcium-dependent cell adhesion proteins. They preferentially interact with themselves in a homophilic manner in connecting cells; cadherins may thus contribute to the sorting of heterogeneous cell types. Required for proper focal adhesion assembly. Involved in the regulation of cell migration. The chain is Cadherin-11 (CDH11) from Homo sapiens (Human).